The sequence spans 360 residues: Peptide chain release factor 1 (360 aa).

Residue Gln-235 is modified to N5-methylglutamine. Residues 283–293 are compositionally biased toward basic and acidic residues; the sequence is EREAQAKEASA. The segment at 283–305 is disordered; it reads EREAQAKEASARKSLIGSGDRSD.

Belongs to the prokaryotic/mitochondrial release factor family. Post-translationally, methylated by PrmC. Methylation increases the termination efficiency of RF1.

It localises to the cytoplasm. Functionally, peptide chain release factor 1 directs the termination of translation in response to the peptide chain termination codons UAG and UAA. In Ralstonia pickettii (strain 12J), this protein is Peptide chain release factor 1.